The following is a 128-amino-acid chain: Sirohydrochlorin cobaltochelatase (128 aa).

Catalysis depends on H9, which acts as the Proton acceptor. Position 9 (H9) interacts with Co(2+). Residues K43 and 68–73 (FATGTH) each bind substrate. Residue H73 participates in Co(2+) binding.

It belongs to the CbiX family. CbiXS subfamily. As to quaternary structure, homotetramer; dimer of dimers.

The catalysed reaction is Co-sirohydrochlorin + 2 H(+) = sirohydrochlorin + Co(2+). It participates in cofactor biosynthesis; adenosylcobalamin biosynthesis; cob(II)yrinate a,c-diamide from sirohydrochlorin (anaerobic route): step 1/10. Functionally, catalyzes the insertion of Co(2+) into sirohydrochlorin as part of the anaerobic pathway to cobalamin biosynthesis. This Saccharolobus islandicus (strain Y.G.57.14 / Yellowstone #1) (Sulfolobus islandicus) protein is Sirohydrochlorin cobaltochelatase.